Reading from the N-terminus, the 167-residue chain is NAD(P)H-quinone oxidoreductase subunit I, chloroplastic (167 aa).

2 consecutive 4Fe-4S ferredoxin-type domains span residues 55–84 (GRIH…VDWK) and 95–124 (LNYS…MTEE). 8 residues coordinate [4Fe-4S] cluster: C64, C67, C70, C74, C104, C107, C110, and C114.

The protein belongs to the complex I 23 kDa subunit family. As to quaternary structure, NDH is composed of at least 16 different subunits, 5 of which are encoded in the nucleus. The cofactor is [4Fe-4S] cluster.

The protein localises to the plastid. Its subcellular location is the chloroplast thylakoid membrane. The enzyme catalyses a plastoquinone + NADH + (n+1) H(+)(in) = a plastoquinol + NAD(+) + n H(+)(out). It catalyses the reaction a plastoquinone + NADPH + (n+1) H(+)(in) = a plastoquinol + NADP(+) + n H(+)(out). In terms of biological role, NDH shuttles electrons from NAD(P)H:plastoquinone, via FMN and iron-sulfur (Fe-S) centers, to quinones in the photosynthetic chain and possibly in a chloroplast respiratory chain. The immediate electron acceptor for the enzyme in this species is believed to be plastoquinone. Couples the redox reaction to proton translocation, and thus conserves the redox energy in a proton gradient. The protein is NAD(P)H-quinone oxidoreductase subunit I, chloroplastic of Gossypium barbadense (Sea Island cotton).